We begin with the raw amino-acid sequence, 266 residues long: MITPLDAHGNIDYNATNILIKYLEGINVDYLFPMGSTGVFPYFTLKERKDFLKFVRENSKKPIMAGVGSSSINEVNELMKFSMDIGIEAAVLMPPYYIKLNQEAIYHYYKEILSSNDMDLLIYNIPQFTNKIDPETVKNLKSEFSSVKGVKDSSADIRGFMEMLSLSDDDFAVFQGQDDLLFTSLELGASGGVCGTTNFSDGIVRLYHEYKNNREMALKIEKNDVIPLMKKLGKYQFPNAYYEYFYKKNNINGGYRPPMYRVGIEI.

Substrate contacts are provided by residues 36-37 (ST), 123-125 (YNI), and 151-153 (KDS). The Schiff-base intermediate with substrate role is filled by lysine 151.

This sequence belongs to the DapA family. KDPG aldolase subfamily. As to quaternary structure, homotetramer; dimer of dimers.

The catalysed reaction is 2-dehydro-3-deoxy-6-phospho-D-gluconate = D-glyceraldehyde 3-phosphate + pyruvate. It carries out the reaction 2-dehydro-3-deoxy-D-gluconate = D-glyceraldehyde + pyruvate. The enzyme catalyses 2-dehydro-3-deoxy-6-phospho-D-galactonate = D-glyceraldehyde 3-phosphate + pyruvate. It catalyses the reaction 2-dehydro-3-deoxy-D-galactonate = D-glyceraldehyde + pyruvate. The protein operates within carbohydrate acid metabolism; 2-dehydro-3-deoxy-D-gluconate degradation; D-glyceraldehyde 3-phosphate and pyruvate from 2-dehydro-3-deoxy-D-gluconate: step 2/2. Involved in the degradation of glucose via the Entner-Doudoroff pathway. Catalyzes the reversible cleavage of 2-keto-3-deoxy-6-phosphogluconate (KDPG) and 2-keto-3-deoxygluconate (KDG) forming pyruvate and glyceraldehyde 3-phosphate or glyceraldehyde, respectively. It is also able to catalyze the reversible cleavage of 2-keto-3-deoxy-6-phosphogalactonate (KDPGal) and 2-keto-3-deoxygalactonate (KDGal). It is equally active with both D- and L-glyceraldehyde. The chain is 2-dehydro-3-deoxy-D-gluconate/2-dehydro-3-deoxy-phosphogluconate aldolase from Picrophilus torridus (strain ATCC 700027 / DSM 9790 / JCM 10055 / NBRC 100828 / KAW 2/3).